Consider the following 202-residue polypeptide: Thymidylate kinase (202 aa).

Residue 7-14 (GIDGSGKT) participates in ATP binding.

It belongs to the thymidylate kinase family.

It catalyses the reaction dTMP + ATP = dTDP + ADP. In terms of biological role, phosphorylation of dTMP to form dTDP in both de novo and salvage pathways of dTTP synthesis. In Ehrlichia chaffeensis (strain ATCC CRL-10679 / Arkansas), this protein is Thymidylate kinase.